The following is a 335-amino-acid chain: Glycerol-3-phosphate dehydrogenase [NAD(P)+] (335 aa).

Serine 15, tyrosine 16, histidine 36, and lysine 110 together coordinate NADPH. Sn-glycerol 3-phosphate-binding residues include lysine 110, glycine 139, and threonine 141. Alanine 143 serves as a coordination point for NADPH. Sn-glycerol 3-phosphate is bound by residues lysine 195, aspartate 248, serine 258, arginine 259, and asparagine 260. Lysine 195 serves as the catalytic Proton acceptor. Arginine 259 contacts NADPH. Residues valine 283 and glutamate 285 each coordinate NADPH.

Belongs to the NAD-dependent glycerol-3-phosphate dehydrogenase family.

It localises to the cytoplasm. The catalysed reaction is sn-glycerol 3-phosphate + NAD(+) = dihydroxyacetone phosphate + NADH + H(+). The enzyme catalyses sn-glycerol 3-phosphate + NADP(+) = dihydroxyacetone phosphate + NADPH + H(+). The protein operates within membrane lipid metabolism; glycerophospholipid metabolism. Catalyzes the reduction of the glycolytic intermediate dihydroxyacetone phosphate (DHAP) to sn-glycerol 3-phosphate (G3P), the key precursor for phospholipid synthesis. In Haemophilus influenzae (strain ATCC 51907 / DSM 11121 / KW20 / Rd), this protein is Glycerol-3-phosphate dehydrogenase [NAD(P)+].